Reading from the N-terminus, the 587-residue chain is FAD-dependent monooxygenase ankC (587 aa).

Residues 7–27 (AVDVLIIGAGPAGLIAAMWMA) form a helical membrane-spanning segment. FAD-binding residues include Tyr-245 and Asp-311.

The protein belongs to the PheA/TfdB FAD monooxygenase family. In terms of assembly, homodimer. FAD is required as a cofactor.

The protein localises to the membrane. The enzyme catalyses cyclo(L-arginyl-L-dehydrotyrosyl) + AH2 + O2 = cyclo(L-arginyl-(Z)-dehydro-3,4-dihydroxytyrosyl) + A + H2O. The protein operates within secondary metabolite biosynthesis. Functionally, FAD-dependent monooxygenase; part of the ank cluster that mediates the biosynthesis of NK13650 C, a highly modified cyclo-arginine-tyrosine dipeptide. AnkC uses as substrate the dehydro-cyclodipeptide intermediate generated by the monooxygase ankB and acts as a hydroxylase that installs the m-OH through a canonical flavin-dependent aromatic hydroxylation mechanism. Within the pathway, the cyclodipeptide synthase ankA acts as the scaffold-generating enzyme and is responsible for formation of the cyclo-Arg-Tyr diketopiperazine (cRY) from L-Arg and L-Tyr. The ankA product cRY is desaturated by the cytochrome P450 monooxygenase ankB to yield a dehydro-cyclodipeptide intermediate. The FAD-dependent monooxygenase ankC then installs the m-OH, ankD catalyzes the attachment of L-homoserine, and ankE ligates citrate to the ankD product to yield NK13650 B. The O-methyltransferase ankF is responsible for methylation of the C-17 phenol group of NK13650 B to produce NK13650 D. Amidation of NK13650 D with L-Asp by ankG then leads to the production of NK13650 C, whereas amidation of NK13650 B produces NK13650 A. The sequence is that of FAD-dependent monooxygenase ankC from Aspergillus thermomutatus (Neosartorya pseudofischeri).